A 73-amino-acid polypeptide reads, in one-letter code: Translational regulator CsrA (73 aa).

This sequence belongs to the CsrA/RsmA family. In terms of assembly, homodimer; the beta-strands of each monomer intercalate to form a hydrophobic core, while the alpha-helices form wings that extend away from the core.

It localises to the cytoplasm. Its function is as follows. A translational regulator that binds mRNA to regulate translation initiation and/or mRNA stability. Usually binds in the 5'-UTR at or near the Shine-Dalgarno sequence preventing ribosome-binding, thus repressing translation. Its main target seems to be the major flagellin gene, while its function is anatagonized by FliW. The sequence is that of Translational regulator CsrA from Clostridium kluyveri (strain NBRC 12016).